A 559-amino-acid chain; its full sequence is DNA ligase (559 aa).

Glutamate 231 serves as a coordination point for ATP. The active-site N6-AMP-lysine intermediate is lysine 233. The ATP site is built by arginine 238 and glutamate 285. The Mg(2+) site is built by glutamate 285 and glutamate 379. Residues lysine 384 and lysine 399 each contribute to the ATP site.

It belongs to the ATP-dependent DNA ligase family. In terms of assembly, interacts with host TOP2A and TOP2B. Mg(2+) serves as cofactor.

It is found in the host cytoplasm. The enzyme catalyses ATP + (deoxyribonucleotide)n-3'-hydroxyl + 5'-phospho-(deoxyribonucleotide)m = (deoxyribonucleotide)n+m + AMP + diphosphate.. In terms of biological role, DNA ligase that seals nicks in double-stranded DNA during DNA replication, DNA recombination and DNA repair. Recruits cellular topoisomerase II to sites of viral replication and assembly. This is DNA ligase (OPG180) from Monkeypox virus.